The chain runs to 335 residues: Methionyl-tRNA formyltransferase (335 aa).

122–125 is a binding site for (6S)-5,6,7,8-tetrahydrofolate; sequence SLLP. The segment at 203-222 is disordered; it reads DSHGPLGEPQDPAKVSKAPR.

The protein belongs to the Fmt family.

The catalysed reaction is L-methionyl-tRNA(fMet) + (6R)-10-formyltetrahydrofolate = N-formyl-L-methionyl-tRNA(fMet) + (6S)-5,6,7,8-tetrahydrofolate + H(+). In terms of biological role, attaches a formyl group to the free amino group of methionyl-tRNA(fMet). The formyl group appears to play a dual role in the initiator identity of N-formylmethionyl-tRNA by promoting its recognition by IF2 and preventing the misappropriation of this tRNA by the elongation apparatus. This is Methionyl-tRNA formyltransferase from Rhodopirellula baltica (strain DSM 10527 / NCIMB 13988 / SH1).